Reading from the N-terminus, the 87-residue chain is Small ribosomal subunit protein bS20 (87 aa).

The segment at 1 to 20 (MANHKSAEKRARQTIKKTER) is disordered.

Belongs to the bacterial ribosomal protein bS20 family.

Binds directly to 16S ribosomal RNA. This is Small ribosomal subunit protein bS20 from Campylobacter jejuni subsp. jejuni serotype O:2 (strain ATCC 700819 / NCTC 11168).